Consider the following 288-residue polypeptide: Aminoglycoside N(3)-acetyltransferase VII (288 aa).

The protein belongs to the antibiotic N-acetyltransferase family.

The enzyme catalyses a 2-deoxystreptamine antibiotic + acetyl-CoA = an N(3)-acetyl-2-deoxystreptamine antibiotic + CoA + H(+). Functionally, resistance to paromomycin. The polypeptide is Aminoglycoside N(3)-acetyltransferase VII (aacC7) (Streptomyces paromomycinus (Streptomyces rimosus subsp. paromomycinus)).